A 607-amino-acid chain; its full sequence is UvrABC system protein C (607 aa).

The GIY-YIG domain maps to 16 to 94 (GRPGVYRMFD…IKEWRPPYNI (79 aa)). The region spanning 203–238 (NALSDELNASMEKAAMALDFERAAELRDQVALLRRV) is the UVR domain.

Belongs to the UvrC family. Interacts with UvrB in an incision complex.

The protein resides in the cytoplasm. The UvrABC repair system catalyzes the recognition and processing of DNA lesions. UvrC both incises the 5' and 3' sides of the lesion. The N-terminal half is responsible for the 3' incision and the C-terminal half is responsible for the 5' incision. This is UvrABC system protein C from Pseudomonas syringae pv. syringae (strain B728a).